The following is a 742-amino-acid chain: Phosphoribosylformylglycinamidine synthase subunit PurL (742 aa).

The active site involves H50. ATP-binding residues include Y53 and K92. E94 is a Mg(2+) binding site. Substrate-binding positions include 95 to 98 (SHNH) and R117. The active-site Proton acceptor is H96. Position 118 (D118) interacts with Mg(2+). Q241 is a binding site for substrate. D269 serves as a coordination point for Mg(2+). Substrate is bound at residue 313 to 315 (ESQ). Residues D494 and G531 each contribute to the ATP site. N532 lines the Mg(2+) pocket. Residue S534 participates in substrate binding.

This sequence belongs to the FGAMS family. Monomer. Part of the FGAM synthase complex composed of 1 PurL, 1 PurQ and 2 PurS subunits.

The protein resides in the cytoplasm. The enzyme catalyses N(2)-formyl-N(1)-(5-phospho-beta-D-ribosyl)glycinamide + L-glutamine + ATP + H2O = 2-formamido-N(1)-(5-O-phospho-beta-D-ribosyl)acetamidine + L-glutamate + ADP + phosphate + H(+). Its pathway is purine metabolism; IMP biosynthesis via de novo pathway; 5-amino-1-(5-phospho-D-ribosyl)imidazole from N(2)-formyl-N(1)-(5-phospho-D-ribosyl)glycinamide: step 1/2. Functionally, part of the phosphoribosylformylglycinamidine synthase complex involved in the purines biosynthetic pathway. Catalyzes the ATP-dependent conversion of formylglycinamide ribonucleotide (FGAR) and glutamine to yield formylglycinamidine ribonucleotide (FGAM) and glutamate. The FGAM synthase complex is composed of three subunits. PurQ produces an ammonia molecule by converting glutamine to glutamate. PurL transfers the ammonia molecule to FGAR to form FGAM in an ATP-dependent manner. PurS interacts with PurQ and PurL and is thought to assist in the transfer of the ammonia molecule from PurQ to PurL. This is Phosphoribosylformylglycinamidine synthase subunit PurL from Sinorhizobium fredii (strain NBRC 101917 / NGR234).